A 210-amino-acid polypeptide reads, in one-letter code: Na(+)-translocating NADH-quinone reductase subunit D (210 aa).

5 consecutive transmembrane segments (helical) span residues 42–62, 72–92, 103–123, 131–151, and 178–198; these read FVMTLAVMFVTALSNFFVSLI, IIVQMAIIASLVIVVDQILKA, VFVGLIITNCIVMGRAEAFAM, FIDGIGNGLGYGFVLMTVGFF, and NGLMLLAPSAFFLIGFMIWAI.

Belongs to the NqrDE/RnfAE family. Composed of six subunits; NqrA, NqrB, NqrC, NqrD, NqrE and NqrF.

It is found in the cell inner membrane. It catalyses the reaction a ubiquinone + n Na(+)(in) + NADH + H(+) = a ubiquinol + n Na(+)(out) + NAD(+). In terms of biological role, NQR complex catalyzes the reduction of ubiquinone-1 to ubiquinol by two successive reactions, coupled with the transport of Na(+) ions from the cytoplasm to the periplasm. NqrA to NqrE are probably involved in the second step, the conversion of ubisemiquinone to ubiquinol. The sequence is that of Na(+)-translocating NADH-quinone reductase subunit D from Vibrio cholerae serotype O1 (strain M66-2).